Here is a 906-residue protein sequence, read N- to C-terminus: Catenin alpha-1 (906 aa).

N-acetylthreonine is present on threonine 2. Positions 2-228 (TAVHAGNINF…PILYTASQAC (227 aa)) are involved in homodimerization. A Glycyl lysine isopeptide (Lys-Gly) (interchain with G-Cter in SUMO2) cross-link involves residue lysine 57. Residues 97–148 (VRKQGDLMKAAAGEFADDPCSSVKRGNMVRAARALLSAVTRLLILADMADVY) are interaction with JUP and CTNNB1. Phosphoserine occurs at positions 264, 268, 295, and 297. Residues 325–394 (TRDDRRERIV…AVMDHVSDSF (70 aa)) form an interaction with alpha-actinin region. Phosphothreonine is present on threonine 634. Position 641 is a phosphoserine; by CK2 (serine 641). A Phosphothreonine modification is found at threonine 645. Serine 652 and serine 655 each carry phosphoserine; by CK1. Phosphothreonine; by CK1 is present on threonine 658. Lysine 797 participates in a covalent cross-link: Glycyl lysine isopeptide (Lys-Gly) (interchain with G-Cter in SUMO2). Serine 851 is subject to Phosphoserine. Over residues 864–880 (PEKKPLVKREKQDETQT) the composition is skewed to basic and acidic residues. A disordered region spans residues 864-894 (PEKKPLVKREKQDETQTKIKRASQKKHVNPV). Residues 881–891 (KIKRASQKKHV) are compositionally biased toward basic residues.

This sequence belongs to the vinculin/alpha-catenin family. In terms of assembly, monomer and homodimer; the monomer preferentially binds to CTNNB1 and the homodimer to actin. Component of an cadherin:catenin adhesion complex composed of at least of CDH26, beta-catenin/CTNNB1, alpha-catenin/CTNNA1 and p120 catenin/CTNND1. Possible component of an E-cadherin/ catenin adhesion complex together with E-cadherin/CDH1 and beta-catenin/CTNNB1 or gamma-catenin/JUP; the complex is located to adherens junctions. The stable association of CTNNA1 is controversial as CTNNA1 was shown not to bind to F-actin when assembled in the complex. Alternatively, the CTNNA1-containing complex may be linked to F-actin by other proteins such as LIMA1. Binds AFDN and F-actin. Interacts with ARHGAP21. Interacts with AJUBA. Interacts with LIMA1. Interacts with vinculin/VCL. Interacts with TJP2/ZO2 (via N-terminus). Interacts with TJP1/ZO1 (via N-terminus). In terms of processing, sumoylated. Phosphorylation seems to contribute to the strength of cell-cell adhesion rather than to the basic capacity for cell-cell adhesion. In terms of tissue distribution, ubiquitously expressed in normal tissues. Abundantly expressed in brain and cerebellum, also expressed in the placenta, liver, lung, colon, heart, pancreas, stomach and thymus.

Its subcellular location is the cytoplasm. It localises to the cytoskeleton. The protein localises to the cell junction. It is found in the adherens junction. The protein resides in the cell membrane. Its subcellular location is the nucleus. Associates with the cytoplasmic domain of a variety of cadherins. The association of catenins to cadherins produces a complex which is linked to the actin filament network, and which seems to be of primary importance for cadherins cell-adhesion properties. Can associate with both E- and N-cadherins. Originally believed to be a stable component of E-cadherin/catenin adhesion complexes and to mediate the linkage of cadherins to the actin cytoskeleton at adherens junctions. In contrast, cortical actin was found to be much more dynamic than E-cadherin/catenin complexes and CTNNA1 was shown not to bind to F-actin when assembled in the complex suggesting a different linkage between actin and adherens junctions components. The homodimeric form may regulate actin filament assembly and inhibit actin branching by competing with the Arp2/3 complex for binding to actin filaments. Involved in the regulation of WWTR1/TAZ, YAP1 and TGFB1-dependent SMAD2 and SMAD3 nuclear accumulation. May play a crucial role in cell differentiation. The chain is Catenin alpha-1 from Homo sapiens (Human).